We begin with the raw amino-acid sequence, 321 residues long: 2-oxoglutarate-dependent dioxygenase frbH (321 aa).

The disordered stretch occupies residues 77–97 (SRNSDTHGYEPVATSTGAQDD). The Fe2OG dioxygenase domain occupies 169-273 (ESLSTLSMFR…RFSIAYFLRA (105 aa)). Positions 194, 196, and 251 each coordinate Fe cation. Arg-264 lines the 2-oxoglutarate pocket.

The protein belongs to the iron/ascorbate-dependent oxidoreductase family.

It functions in the pathway antifungal biosynthesis. Functionally, 2-oxoglutarate-dependent dioxygenase; part of the gene cluster that mediates the biosynthesis of the antifungal antibiotic FR901469, an inhibitor of beta-1,3-glucansynthase, exerting antifungal activity against the pathogenes Candida albicans and Aspergillus fumigatus. FR901469 is a cyclic depsipeptide containing 12 amino acid residues and a fatty acid chain. The NRPS frbI contains 12 modules responsible for the formation of the depsipeptide backbone which is denoted as Acyl-Thr-Ala-Tyr-Val-4OHPro-Thr-Thr-3OHPro-threo3OHGln-Gly-Thr-Orn-OH (C71H116N14O23). The PKS frbB is probably involved in the production of the hydrocarbon chain, and the acyl-CoA ligase frbC might be involved in the transport of the chain to the peptide ptoduct of frbI. Because FR901469 contains 3 hydroxylated amino acid residues, the 3 oxygenases frbA, frbH, and frbJ might be participating in amino acid hydroxylation. As no thioesterase domains were detected in frbI or frbB, the thioesterases frbD and frbE may instead release and cyclize the products of the NRPS and PKS, respectively. The protein is 2-oxoglutarate-dependent dioxygenase frbH of Dothideomycetidae sp. (strain 11243) (Fungal sp. (strain No.11243)).